Reading from the N-terminus, the 562-residue chain is Protein KASH5 (562 aa).

Residues 1-521 (MDLPEGPVGG…PQRLRVTRHP (521 aa)) lie on the Cytoplasmic side of the membrane. The interval 125-153 (ALTSRQLPSGCPEAEEPANLESFGGEDPR) is disordered. The stretch at 164–349 (SSLEDLELSN…LEEQLSQTYE (186 aa)) forms a coiled coil. The interval 407-481 (ETSEETEFPS…DIPENPPERP (75 aa)) is disordered. A compositionally biased stretch (basic and acidic residues) spans 431–448 (AHPEEGRKEPSMWLTRRE). Residues 522–542 (LIPAPVLGLLLLLLLSVLLLG) form a helical; Anchor for type IV membrane protein membrane-spanning segment. Residues 541 to 562 (LGPSPPPTWPHLQLCYLQPPPV) form an interaction with SUN1 region. Over 543 to 562 (PSPPPTWPHLQLCYLQPPPV) the chain is Perinuclear space.

As to quaternary structure, core component the LINC complex which is composed of inner nuclear membrane SUN domain-containing proteins coupled to outer nuclear membrane KASH domain-containing nesprins. SUN and KASH domain-containing proteins seem to bind each other promiscuously; however, differentially expression of LINC complex constituents is giving rise to specific assemblies. At least SUN1/2-containing core LINC complexes are proposed to be hexameric composed of three protomers of each KASH and SUN domain-containing protein. Interacts with SUN1; this interaction mediates its telomere localization by forming a SUN1:KASH5 LINC complex. Component of a probable SUN2:KASH5 LINC complex. Self-associates. Interacts with DYNC1H1, DCTN1, DYNC1I1/2 and PAFAH1B1; suggesting the association with the dynein-dynactin motor complex. In terms of tissue distribution, expressed in testis (at protein level).

It is found in the nucleus outer membrane. It localises to the nucleus. The protein localises to the chromosome. The protein resides in the telomere. Its subcellular location is the nucleus envelope. As a component of the LINC (LInker of Nucleoskeleton and Cytoskeleton) complex, involved in the connection between the nuclear lamina and the cytoskeleton. The nucleocytoplasmic interactions established by the LINC complex play an important role in the transmission of mechanical forces across the nuclear envelope and in nuclear movement and positioning. Required for telomere attachment to nuclear envelope in the prophase of meiosis. Required for rapid telomere prophase movements implicating a SUN1/2:KASH5 LINC complex in which SUN1 and SUN2 seem to act at least partial redundantly. Required for homolog pairing during meiotic prophase in spermatocytes and probably oocytes. Essential for male and female gametogenesis. Recruits cytoplasmic dynein to telomere attachment sites at the nuclear envelope in spermatocytes. In oocytes is involved in meiotic resumption and spindle formation. The protein is Protein KASH5 of Homo sapiens (Human).